The following is a 373-amino-acid chain: Protein SENSITIVE TO PROTON RHIZOTOXICITY 2 (373 aa).

C2H2-type zinc fingers lie at residues 217–239 and 327–362; these read HYCQICGKGFKRDANLRMHMRAH and KHCGDIKWVCSCGTKFSRKDKLMSHVSLFLGHVPAH.

Expressed at low levels in roots (e.g. root tips and lateral roots), leaves (e.g. at the edge of mature leaves, possibly in hydathodes, and in vascular bundles), flowers (e.g. floral filaments), stems, siliques and cotyledons.

The protein resides in the nucleus. Its function is as follows. Probable transcription factor. Together with STOP1, plays a critical role in tolerance to major stress factors in acid soils such as proton H(+) and aluminum ion Al(3+). Required for the expression of genes in response to acidic stress (e.g. ALMT1 and MATE), and Al-activated citrate exudation. The protein is Protein SENSITIVE TO PROTON RHIZOTOXICITY 2 of Arabidopsis thaliana (Mouse-ear cress).